The chain runs to 194 residues: MSITNATISQRAKKWLEDDRIFIDTETTGLGDDAEIVEICLIDSAGFIMLNTLVKPTKPIPAEATAIHGITDEMVMYAPTWKDIHGAVASLFFEYGFVIYNADYDTRLIYQTAKLYGLENDGFCYFLNERSACAMMLYAEYRGEPGRFKGYKWHKLVDAAAHEGVSVEGKAHRALADCRMTLGIIDALAKGGAA.

Residues 20–185 enclose the Exonuclease domain; the sequence is RIFIDTETTG…ADCRMTLGII (166 aa).

This is an uncharacterized protein from Escherichia coli (Bacteriophage 186).